The primary structure comprises 130 residues: uncharacterized protein (130 aa).

The tract at residues 1-104 (MRPGSSPRAP…RGRWGLRGGP (104 aa)) is disordered. Positions 88-97 (RRQPGPQRGR) are enriched in low complexity.

This is an uncharacterized protein from Homo sapiens (Human).